Here is a 562-residue protein sequence, read N- to C-terminus: NAD-dependent malic enzyme (562 aa).

Tyr-101 functions as the Proton donor in the catalytic mechanism. Arg-154 lines the NAD(+) pocket. Lys-172 acts as the Proton acceptor in catalysis. Residues Glu-243, Asp-244, and Asp-267 each coordinate a divalent metal cation. Residues Asp-267 and Asn-415 each contribute to the NAD(+) site.

Belongs to the malic enzymes family. Homotetramer. The cofactor is Mg(2+). Mn(2+) is required as a cofactor.

It catalyses the reaction (S)-malate + NAD(+) = pyruvate + CO2 + NADH. The catalysed reaction is oxaloacetate + H(+) = pyruvate + CO2. The chain is NAD-dependent malic enzyme from Aliivibrio fischeri (strain MJ11) (Vibrio fischeri).